We begin with the raw amino-acid sequence, 181 residues long: Coatomer subunit zeta-3 (181 aa).

Belongs to the adaptor complexes small subunit family. Oligomeric complex that consists of at least the alpha, beta, beta', gamma, delta, epsilon and zeta subunits.

The protein localises to the cytoplasm. It is found in the golgi apparatus membrane. It localises to the cytoplasmic vesicle. Its subcellular location is the COPI-coated vesicle membrane. In terms of biological role, the coatomer is a cytosolic protein complex that binds to dilysine motifs and reversibly associates with Golgi non-clathrin-coated vesicles, which further mediate biosynthetic protein transport from the ER, via the Golgi up to the trans Golgi network. Coatomer complex is required for budding from Golgi membranes, and is essential for the retrograde Golgi-to-ER transport of dilysine-tagged proteins. The zeta subunit may be involved in regulating the coat assembly and, hence, the rate of biosynthetic protein transport due to its association-dissociation properties with the coatomer complex. The sequence is that of Coatomer subunit zeta-3 from Arabidopsis thaliana (Mouse-ear cress).